Here is a 181-residue protein sequence, read N- to C-terminus: ATP-dependent protease subunit HslV (181 aa).

Thr9 is a catalytic residue. Residues Ala166, Cys169, and Thr172 each coordinate Na(+).

Belongs to the peptidase T1B family. HslV subfamily. In terms of assembly, a double ring-shaped homohexamer of HslV is capped on each side by a ring-shaped HslU homohexamer. The assembly of the HslU/HslV complex is dependent on binding of ATP.

Its subcellular location is the cytoplasm. It carries out the reaction ATP-dependent cleavage of peptide bonds with broad specificity.. With respect to regulation, allosterically activated by HslU binding. In terms of biological role, protease subunit of a proteasome-like degradation complex believed to be a general protein degrading machinery. The sequence is that of ATP-dependent protease subunit HslV from Staphylococcus aureus (strain JH1).